A 619-amino-acid polypeptide reads, in one-letter code: 1-deoxy-D-xylulose-5-phosphate synthase (619 aa).

Thiamine diphosphate contacts are provided by residues H74 and 115 to 117; that span reads GHS. D146 provides a ligand contact to Mg(2+). Thiamine diphosphate is bound by residues 147–148, N175, Y285, and E365; that span reads GA. Mg(2+) is bound at residue N175.

Belongs to the transketolase family. DXPS subfamily. In terms of assembly, homodimer. Mg(2+) serves as cofactor. The cofactor is thiamine diphosphate.

It carries out the reaction D-glyceraldehyde 3-phosphate + pyruvate + H(+) = 1-deoxy-D-xylulose 5-phosphate + CO2. Its pathway is metabolic intermediate biosynthesis; 1-deoxy-D-xylulose 5-phosphate biosynthesis; 1-deoxy-D-xylulose 5-phosphate from D-glyceraldehyde 3-phosphate and pyruvate: step 1/1. Catalyzes the acyloin condensation reaction between C atoms 2 and 3 of pyruvate and glyceraldehyde 3-phosphate to yield 1-deoxy-D-xylulose-5-phosphate (DXP). In Clostridium perfringens (strain ATCC 13124 / DSM 756 / JCM 1290 / NCIMB 6125 / NCTC 8237 / Type A), this protein is 1-deoxy-D-xylulose-5-phosphate synthase.